A 612-amino-acid chain; its full sequence is Dihydroxy-acid dehydratase (612 aa).

Residue Asp-81 coordinates Mg(2+). Position 122 (Cys-122) interacts with [2Fe-2S] cluster. Positions 123 and 124 each coordinate Mg(2+). Lys-124 is subject to N6-carboxylysine. Cys-195 contributes to the [2Fe-2S] cluster binding site. Glu-491 serves as a coordination point for Mg(2+). Ser-517 serves as the catalytic Proton acceptor.

The protein belongs to the IlvD/Edd family. As to quaternary structure, homodimer. The cofactor is [2Fe-2S] cluster. Mg(2+) serves as cofactor.

The catalysed reaction is (2R)-2,3-dihydroxy-3-methylbutanoate = 3-methyl-2-oxobutanoate + H2O. It carries out the reaction (2R,3R)-2,3-dihydroxy-3-methylpentanoate = (S)-3-methyl-2-oxopentanoate + H2O. The protein operates within amino-acid biosynthesis; L-isoleucine biosynthesis; L-isoleucine from 2-oxobutanoate: step 3/4. Its pathway is amino-acid biosynthesis; L-valine biosynthesis; L-valine from pyruvate: step 3/4. Functionally, functions in the biosynthesis of branched-chain amino acids. Catalyzes the dehydration of (2R,3R)-2,3-dihydroxy-3-methylpentanoate (2,3-dihydroxy-3-methylvalerate) into 2-oxo-3-methylpentanoate (2-oxo-3-methylvalerate) and of (2R)-2,3-dihydroxy-3-methylbutanoate (2,3-dihydroxyisovalerate) into 2-oxo-3-methylbutanoate (2-oxoisovalerate), the penultimate precursor to L-isoleucine and L-valine, respectively. The chain is Dihydroxy-acid dehydratase from Rhizobium etli (strain CIAT 652).